Here is a 536-residue protein sequence, read N- to C-terminus: Putative cysteine ligase BshC (536 aa).

Belongs to the BshC family.

Its function is as follows. Involved in bacillithiol (BSH) biosynthesis. May catalyze the last step of the pathway, the addition of cysteine to glucosamine malate (GlcN-Mal) to generate BSH. The polypeptide is Putative cysteine ligase BshC (Anoxybacillus flavithermus (strain DSM 21510 / WK1)).